The following is a 364-amino-acid chain: Putative methylthioribose-1-phosphate isomerase (364 aa).

Residues Arg-57–Ala-59, Arg-100, and Gln-206 each bind substrate. Asp-247 functions as the Proton donor in the catalytic mechanism. Residue Asn-257 to Lys-258 participates in substrate binding.

This sequence belongs to the eIF-2B alpha/beta/delta subunits family. MtnA subfamily.

It carries out the reaction 5-(methylsulfanyl)-alpha-D-ribose 1-phosphate = 5-(methylsulfanyl)-D-ribulose 1-phosphate. In terms of biological role, catalyzes the interconversion of methylthioribose-1-phosphate (MTR-1-P) into methylthioribulose-1-phosphate (MTRu-1-P). The chain is Putative methylthioribose-1-phosphate isomerase from Pyrococcus horikoshii (strain ATCC 700860 / DSM 12428 / JCM 9974 / NBRC 100139 / OT-3).